The primary structure comprises 234 residues: Cysteine proteinase inhibitor 6 (234 aa).

A signal peptide spans 1 to 24; sequence MMRSRFLLFIVFFSLSLFISSLIA. At Met2 the chain carries N-acetylalanine. 2 Cystatin domains span residues 38–126 and 145–215; these read GGVG…KPAS and SGWR…FKVE. Positions 82-86 match the Secondary area of contact motif; that stretch reads QVVAG. The tract at residues 133–154 is disordered; it reads SSDLGCKQGEHESGWREVPGDD. The segment covering 140–154 has biased composition (basic and acidic residues); that stretch reads QGEHESGWREVPGDD. A Phosphoserine modification is found at Ser174.

Belongs to the cystatin family. Phytocystatin subfamily.

The protein resides in the secreted. Functionally, specific inhibitor of cysteine proteinases. Probably involved in the regulation of endogenous processes and in defense against pests and pathogens. This Arabidopsis thaliana (Mouse-ear cress) protein is Cysteine proteinase inhibitor 6 (CYS6).